A 157-amino-acid chain; its full sequence is Ribosomal RNA large subunit methyltransferase H (157 aa).

Residues G106 and 125-130 contribute to the S-adenosyl-L-methionine site; that span reads LSEMTF.

This sequence belongs to the RNA methyltransferase RlmH family. In terms of assembly, homodimer.

Its subcellular location is the cytoplasm. It carries out the reaction pseudouridine(1915) in 23S rRNA + S-adenosyl-L-methionine = N(3)-methylpseudouridine(1915) in 23S rRNA + S-adenosyl-L-homocysteine + H(+). In terms of biological role, specifically methylates the pseudouridine at position 1915 (m3Psi1915) in 23S rRNA. In Syntrophobacter fumaroxidans (strain DSM 10017 / MPOB), this protein is Ribosomal RNA large subunit methyltransferase H.